The chain runs to 174 residues: 2-hydroxy-palmitic acid dioxygenase MPO1 (174 aa).

Topologically, residues 1–23 (MGEGLLDLRSQLGFYKFYHHNPK) are cytoplasmic. A helical transmembrane segment spans residues 24-44 (NVLIHSIFVPTILFSGSCMLH). The Lumenal portion of the chain corresponds to 45-63 (RVKIYQSISLTAVLSVLFS). The helical transmembrane segment at 64 to 84 (IFYCLLYLPTGLLAGVLLLLL) threads the bilayer. The Cytoplasmic portion of the chain corresponds to 85–98 (NLALIDHRVDLTFK). A helical membrane pass occupies residues 99–119 (QELGLFTIGWIFQFVGHGVFE). Residues 120–131 (KRRPALIDNLVQ) lie on the Lumenal side of the membrane. The helical transmembrane segment at 132–152 (SLVLAPYFIMFEFLFKLGFMP) threads the bilayer. Topologically, residues 153 to 174 (RLKATLEHDLEIKQRNLRMQRQ) are cytoplasmic.

The protein belongs to the MPO1 family. Requires Fe(2+) as cofactor.

The protein resides in the endoplasmic reticulum membrane. It carries out the reaction (R)-2-hydroxyhexadecanoate + O2 = pentadecanoate + CO2 + H2O. In terms of biological role, dioxygenase that catalyzes the alpha-oxidation of 2-hydroxy fatty acids in an iron-dependent manner. Involved in metabolism of phytosphingosine and is required for proper endoplasmic reticulum stress response. The chain is 2-hydroxy-palmitic acid dioxygenase MPO1 from Saccharomyces cerevisiae (strain ATCC 204508 / S288c) (Baker's yeast).